A 305-amino-acid chain; its full sequence is ATP synthase gamma chain (305 aa).

The protein belongs to the ATPase gamma chain family. As to quaternary structure, F-type ATPases have 2 components, CF(1) - the catalytic core - and CF(0) - the membrane proton channel. CF(1) has five subunits: alpha(3), beta(3), gamma(1), delta(1), epsilon(1). CF(0) has three main subunits: a, b and c.

It is found in the cell membrane. Its function is as follows. Produces ATP from ADP in the presence of a proton gradient across the membrane. The gamma chain is believed to be important in regulating ATPase activity and the flow of protons through the CF(0) complex. The sequence is that of ATP synthase gamma chain from Mycobacterium tuberculosis (strain ATCC 25177 / H37Ra).